The following is a 336-amino-acid chain: Ornithine carbamoyltransferase, catabolic (336 aa).

Carbamoyl phosphate is bound by residues 57 to 60, Q84, R108, and 135 to 138; these read STRT and HPTQ. L-ornithine-binding positions include N169, D233, and 237-238; that span reads SM. Carbamoyl phosphate is bound by residues 275 to 276 and R322; that span reads CL.

The protein belongs to the aspartate/ornithine carbamoyltransferase superfamily. OTCase family.

It localises to the cytoplasm. It catalyses the reaction carbamoyl phosphate + L-ornithine = L-citrulline + phosphate + H(+). Its pathway is amino-acid degradation; L-arginine degradation via ADI pathway; carbamoyl phosphate from L-arginine: step 2/2. Its function is as follows. Reversibly catalyzes the transfer of the carbamoyl group from carbamoyl phosphate (CP) to the N(epsilon) atom of ornithine (ORN) to produce L-citrulline. The sequence is that of Ornithine carbamoyltransferase, catabolic from Photobacterium profundum (strain SS9).